We begin with the raw amino-acid sequence, 759 residues long: uncharacterized protein (759 aa).

2 disordered regions span residues 1–31 (MDGN…TSFQ) and 188–211 (NDEG…PFAN). Positions 17 to 31 (LSPLQTSFPSSTSFQ) are enriched in low complexity. The span at 189 to 207 (DEGEDVKDNEQDDNIDESD) shows a compositional bias: acidic residues. 10 consecutive transmembrane segments (helical) span residues 434–454 (YFRT…ILPM), 456–476 (FQGG…VGIL), 486–505 (MYNS…LSRA), 517–537 (FCFS…YIVL), 555–575 (MFYA…GAAL), 597–617 (DKWK…VNQA), 620–640 (SQWP…YFTA), 643–663 (FGSN…LGNI), 670–690 (GVAF…GLAA), and 726–746 (LVMV…ALVV).

The protein belongs to the ThrE exporter (TC 2.A.79) family.

It is found in the endoplasmic reticulum membrane. This is an uncharacterized protein from Schizosaccharomyces pombe (strain 972 / ATCC 24843) (Fission yeast).